Consider the following 185-residue polypeptide: NEDD8-conjugating enzyme UBE2F (185 aa).

Residues 1 to 29 form an interaction with uba3 region; sequence MLTLASKLKREEGVRAGRTPAGSNDAAHR. In terms of domain architecture, UBC core spans 32-185; it reads IRDRLLIKEV…VQDFIKNYAR (154 aa). The Glycyl thioester intermediate role is filled by Cys-116.

It belongs to the ubiquitin-conjugating enzyme family. UBE2F subfamily.

The enzyme catalyses [E1 NEDD8-activating enzyme]-S-[NEDD8 protein]-yl-L-cysteine + [E2 NEDD8-conjugating enzyme]-L-cysteine = [E1 NEDD8-activating enzyme]-L-cysteine + [E2 NEDD8-conjugating enzyme]-S-[NEDD8-protein]-yl-L-cysteine.. It functions in the pathway protein modification; protein neddylation. Functionally, accepts the ubiquitin-like protein NEDD8 from the UBA3-NAE1 E1 complex and catalyzes its covalent attachment to other proteins. Together with the E3 ubiquitin ligase rnf7/rbx2, specifically neddylates cullin-5 (cul5). Does not neddylate cul1, cul2, cul3, cul4a or cul4b. The sequence is that of NEDD8-conjugating enzyme UBE2F (ube2f) from Danio rerio (Zebrafish).